The primary structure comprises 1381 residues: DNA-directed RNA polymerase subunit beta'' (1381 aa).

Zn(2+) contacts are provided by C224, C295, C302, and C305.

It belongs to the RNA polymerase beta' chain family. RpoC2 subfamily. In plastids the minimal PEP RNA polymerase catalytic core is composed of four subunits: alpha, beta, beta', and beta''. When a (nuclear-encoded) sigma factor is associated with the core the holoenzyme is formed, which can initiate transcription. Zn(2+) serves as cofactor.

Its subcellular location is the plastid. The protein resides in the chloroplast. The enzyme catalyses RNA(n) + a ribonucleoside 5'-triphosphate = RNA(n+1) + diphosphate. In terms of biological role, DNA-dependent RNA polymerase catalyzes the transcription of DNA into RNA using the four ribonucleoside triphosphates as substrates. The polypeptide is DNA-directed RNA polymerase subunit beta'' (Guizotia abyssinica (Niger)).